A 211-amino-acid polypeptide reads, in one-letter code: Large ribosomal subunit protein bL25 (211 aa).

This sequence belongs to the bacterial ribosomal protein bL25 family. CTC subfamily. In terms of assembly, part of the 50S ribosomal subunit; part of the 5S rRNA/L5/L18/L25 subcomplex. Contacts the 5S rRNA. Binds to the 5S rRNA independently of L5 and L18.

Functionally, this is one of the proteins that binds to the 5S RNA in the ribosome where it forms part of the central protuberance. The sequence is that of Large ribosomal subunit protein bL25 from Methylobacterium nodulans (strain LMG 21967 / CNCM I-2342 / ORS 2060).